A 233-amino-acid chain; its full sequence is Orotate phosphoribosyltransferase (233 aa).

Residue Lys-29 participates in 5-phospho-alpha-D-ribose 1-diphosphate binding. 37 to 38 (FF) provides a ligand contact to orotate. 5-phospho-alpha-D-ribose 1-diphosphate is bound by residues 79-80 (YK), Arg-109, Lys-110, Lys-113, His-115, and 135-143 (DDVITAGTA). Orotate contacts are provided by Thr-139 and Arg-167.

It belongs to the purine/pyrimidine phosphoribosyltransferase family. PyrE subfamily. As to quaternary structure, homodimer.

The enzyme catalyses orotidine 5'-phosphate + diphosphate = orotate + 5-phospho-alpha-D-ribose 1-diphosphate. It functions in the pathway pyrimidine metabolism; UMP biosynthesis via de novo pathway; UMP from orotate: step 1/2. Functionally, catalyzes the transfer of a ribosyl phosphate group from 5-phosphoribose 1-diphosphate to orotate, leading to the formation of orotidine monophosphate (OMP). In Neurospora crassa (strain ATCC 24698 / 74-OR23-1A / CBS 708.71 / DSM 1257 / FGSC 987), this protein is Orotate phosphoribosyltransferase (ura-5).